Consider the following 601-residue polypeptide: MSKPAFDYRNVLQNLPTLPGVYRMLDAAGKVLYVGKAIDLKRRVSSYFQKNDLSPRIQLMVRQIASIETTVTRSEAEALILENNLIKALAPRYNILFRDDKSYPYLMFSGHAFPQMAYYRGEPKKPNQYFGPYPNGYAVRESIQILQKVFRLRTCEDAVFANRSRPCLLYQIKRCSGPCVDHISKEEYAADVASAVAFLNGRQSELINELTRRMTAAAEAMAFEQAAELRDQIQALARVQEKQFVASNQSQQDCDVVAARVRDGVPCVNLVMIRGGRHLGDKSHFPIGGEADTEQEILEAFIGQHYQHAGVPAALVVNGVVDDALQQFLQERAGRKVYIVGNPIGERRVWLEMAEKNAELAILQRLGSKATQAQRLAQLNEVLELEDAGRFECFDISHTMGEATVASCVVYDKGAMQPTEYRRFNITTAAPGDDYAAMREVLSRRYGKLAEGEGRLPDAVFIDGGKGQVGVALEVLGELGLNLPIVGIAKGEERKPGLETLILPYLEKTLQLRQDHPALHLIQTVRDEAHRFAITGHRARRAKARTSSTLEDIPGIGAKRRQQLLTRFGGLRGVATASVDDLAQVEGISRTLAEKIYNALH.

The GIY-YIG domain maps to 17 to 95 (TLPGVYRMLD…IKALAPRYNI (79 aa)). The UVR domain occupies 204–239 (SELINELTRRMTAAAEAMAFEQAAELRDQIQALARV).

This sequence belongs to the UvrC family. As to quaternary structure, interacts with UvrB in an incision complex.

It is found in the cytoplasm. The UvrABC repair system catalyzes the recognition and processing of DNA lesions. UvrC both incises the 5' and 3' sides of the lesion. The N-terminal half is responsible for the 3' incision and the C-terminal half is responsible for the 5' incision. This Chromobacterium violaceum (strain ATCC 12472 / DSM 30191 / JCM 1249 / CCUG 213 / NBRC 12614 / NCIMB 9131 / NCTC 9757 / MK) protein is UvrABC system protein C.